A 133-amino-acid chain; its full sequence is Large ribosomal subunit protein eL32 (133 aa).

Belongs to the eukaryotic ribosomal protein eL32 family.

The sequence is that of Large ribosomal subunit protein eL32 (rpl32) from Dictyostelium discoideum (Social amoeba).